The following is a 370-amino-acid chain: UDP-3-O-acylglucosamine N-acyltransferase (370 aa).

Catalysis depends on H252, which acts as the Proton acceptor. Residues N348–V370 form a disordered region.

This sequence belongs to the transferase hexapeptide repeat family. LpxD subfamily. In terms of assembly, homotrimer.

It catalyses the reaction a UDP-3-O-[(3R)-3-hydroxyacyl]-alpha-D-glucosamine + a (3R)-hydroxyacyl-[ACP] = a UDP-2-N,3-O-bis[(3R)-3-hydroxyacyl]-alpha-D-glucosamine + holo-[ACP] + H(+). Its pathway is bacterial outer membrane biogenesis; LPS lipid A biosynthesis. Catalyzes the N-acylation of UDP-3-O-acylglucosamine using 3-hydroxyacyl-ACP as the acyl donor. Is involved in the biosynthesis of lipid A, a phosphorylated glycolipid that anchors the lipopolysaccharide to the outer membrane of the cell. In Paraburkholderia phytofirmans (strain DSM 17436 / LMG 22146 / PsJN) (Burkholderia phytofirmans), this protein is UDP-3-O-acylglucosamine N-acyltransferase.